Reading from the N-terminus, the 321-residue chain is F420-non-reducing hydrogenase iron-sulfur subunit G (321 aa).

The protein belongs to the [NiFe]/[NiFeSe] hydrogenase small subunit family. In terms of assembly, the F420-non-reducing hydrogenase is composed of three subunits; MvhA, MvhD and MvhG. It forms a complex with the heterodisulfide reductase (Hdr).

The protein resides in the cytoplasm. Its function is as follows. Part of a complex that provides reducing equivalents for heterodisulfide reductase. This is F420-non-reducing hydrogenase iron-sulfur subunit G (mvhG) from Archaeoglobus profundus (strain DSM 5631 / JCM 9629 / NBRC 100127 / Av18).